The sequence spans 142 residues: Large ribosomal subunit protein uL13 (142 aa).

It belongs to the universal ribosomal protein uL13 family. Part of the 50S ribosomal subunit.

This protein is one of the early assembly proteins of the 50S ribosomal subunit, although it is not seen to bind rRNA by itself. It is important during the early stages of 50S assembly. This chain is Large ribosomal subunit protein uL13, found in Polynucleobacter asymbioticus (strain DSM 18221 / CIP 109841 / QLW-P1DMWA-1) (Polynucleobacter necessarius subsp. asymbioticus).